A 101-amino-acid chain; its full sequence is Small ribosomal subunit protein uS14 (101 aa).

This sequence belongs to the universal ribosomal protein uS14 family. As to quaternary structure, part of the 30S ribosomal subunit. Contacts proteins S3 and S10.

In terms of biological role, binds 16S rRNA, required for the assembly of 30S particles and may also be responsible for determining the conformation of the 16S rRNA at the A site. In Rhizobium meliloti (strain 1021) (Ensifer meliloti), this protein is Small ribosomal subunit protein uS14.